The primary structure comprises 282 residues: Dihydropteroate synthase (282 aa).

One can recognise a Pterin-binding domain in the interval 15–267 (PHVMGILNVT…DVKETVEAMR (253 aa)). Mg(2+) is bound at residue N22. (7,8-dihydropterin-6-yl)methyl diphosphate-binding positions include T62, D96, N115, D185, K221, and 255–257 (RVH).

It belongs to the DHPS family. Homodimer. Mg(2+) serves as cofactor.

The enzyme catalyses (7,8-dihydropterin-6-yl)methyl diphosphate + 4-aminobenzoate = 7,8-dihydropteroate + diphosphate. Its pathway is cofactor biosynthesis; tetrahydrofolate biosynthesis; 7,8-dihydrofolate from 2-amino-4-hydroxy-6-hydroxymethyl-7,8-dihydropteridine diphosphate and 4-aminobenzoate: step 1/2. Its function is as follows. Catalyzes the condensation of para-aminobenzoate (pABA) with 6-hydroxymethyl-7,8-dihydropterin diphosphate (DHPt-PP) to form 7,8-dihydropteroate (H2Pte), the immediate precursor of folate derivatives. The sequence is that of Dihydropteroate synthase (folP) from Shigella flexneri.